A 251-amino-acid chain; its full sequence is tRNA (guanine-N(7)-)-methyltransferase (251 aa).

S-adenosyl-L-methionine is bound by residues Glu69, Glu94, Asp121, and Asp143. Residue Asp143 is part of the active site. Lys147 and Asp179 together coordinate substrate.

It belongs to the class I-like SAM-binding methyltransferase superfamily. TrmB family.

It carries out the reaction guanosine(46) in tRNA + S-adenosyl-L-methionine = N(7)-methylguanosine(46) in tRNA + S-adenosyl-L-homocysteine. It functions in the pathway tRNA modification; N(7)-methylguanine-tRNA biosynthesis. Catalyzes the formation of N(7)-methylguanine at position 46 (m7G46) in tRNA. This Rhodopseudomonas palustris (strain BisB18) protein is tRNA (guanine-N(7)-)-methyltransferase.